A 306-amino-acid polypeptide reads, in one-letter code: Curved DNA-binding protein (306 aa).

The 65-residue stretch at 5–69 folds into the J domain; the sequence is DYYAIMGVKP…QRRAEYDQMW (65 aa).

The protein localises to the cytoplasm. It localises to the nucleoid. In terms of biological role, DNA-binding protein that preferentially recognizes a curved DNA sequence. It is probably a functional analog of DnaJ; displays overlapping activities with DnaJ, but functions under different conditions, probably acting as a molecular chaperone in an adaptive response to environmental stresses other than heat shock. Lacks autonomous chaperone activity; binds native substrates and targets them for recognition by DnaK. Its activity is inhibited by the binding of CbpM. This chain is Curved DNA-binding protein, found in Shigella dysenteriae serotype 1 (strain Sd197).